The chain runs to 231 residues: Probable pseudouridine-5'-phosphatase (231 aa).

The active-site Nucleophile is the D15. Mg(2+) contacts are provided by D15 and D17. D17 serves as the catalytic Proton donor.

The protein belongs to the HAD-like hydrolase superfamily. CbbY/CbbZ/Gph/YieH family. The cofactor is Mg(2+).

The catalysed reaction is psi-UMP + H2O = pseudouridine + phosphate. In terms of biological role, dephosphorylates pseudouridine 5'-phosphate, a potential intermediate in rRNA degradation. The protein is Probable pseudouridine-5'-phosphatase (Gs1l) of Drosophila melanogaster (Fruit fly).